A 349-amino-acid chain; its full sequence is 4-hydroxy-tetrahydrodipicolinate reductase 2, chloroplastic (349 aa).

Residues 1 to 53 (MAANGLMAASSVFLHRPVHPHFSFSSRTNQMVPLGFKGRVSFIGNVKRCFPVV) constitute a chloroplast transit peptide. NAD(+) contacts are provided by residues 81-86 (GCSGKM), 173-175 (GTT), and 196-199 (SPQM). The Proton donor/acceptor role is filled by histidine 232. Residue lysine 236 is the Proton donor of the active site. Residue 241–242 (GT) participates in (S)-2,3,4,5-tetrahydrodipicolinate binding.

Belongs to the DapB family.

The protein resides in the plastid. It localises to the chloroplast. The catalysed reaction is (S)-2,3,4,5-tetrahydrodipicolinate + NAD(+) + H2O = (2S,4S)-4-hydroxy-2,3,4,5-tetrahydrodipicolinate + NADH + H(+). It catalyses the reaction (S)-2,3,4,5-tetrahydrodipicolinate + NADP(+) + H2O = (2S,4S)-4-hydroxy-2,3,4,5-tetrahydrodipicolinate + NADPH + H(+). The protein operates within amino-acid biosynthesis; L-lysine biosynthesis via DAP pathway; (S)-tetrahydrodipicolinate from L-aspartate: step 4/4. Catalyzes the conversion of 4-hydroxy-tetrahydrodipicolinate (HTPA) to tetrahydrodipicolinate. This chain is 4-hydroxy-tetrahydrodipicolinate reductase 2, chloroplastic (DAPB2), found in Arabidopsis thaliana (Mouse-ear cress).